Reading from the N-terminus, the 281-residue chain is Imidazole glycerol phosphate synthase subunit HisF (281 aa).

Active-site residues include Asp-12 and Asp-131. A disordered region spans residues 256–281 (VRQAEPLPQPAREGLGDSARRAMSSG).

This sequence belongs to the HisA/HisF family. Heterodimer of HisH and HisF.

The protein resides in the cytoplasm. The enzyme catalyses 5-[(5-phospho-1-deoxy-D-ribulos-1-ylimino)methylamino]-1-(5-phospho-beta-D-ribosyl)imidazole-4-carboxamide + L-glutamine = D-erythro-1-(imidazol-4-yl)glycerol 3-phosphate + 5-amino-1-(5-phospho-beta-D-ribosyl)imidazole-4-carboxamide + L-glutamate + H(+). Its pathway is amino-acid biosynthesis; L-histidine biosynthesis; L-histidine from 5-phospho-alpha-D-ribose 1-diphosphate: step 5/9. IGPS catalyzes the conversion of PRFAR and glutamine to IGP, AICAR and glutamate. The HisF subunit catalyzes the cyclization activity that produces IGP and AICAR from PRFAR using the ammonia provided by the HisH subunit. This Thermosynechococcus vestitus (strain NIES-2133 / IAM M-273 / BP-1) protein is Imidazole glycerol phosphate synthase subunit HisF.